A 358-amino-acid chain; its full sequence is cAMP-dependent protein kinase catalytic subunit PRKX (358 aa).

Methionine 1 bears the N-acetylmethionine mark. The tract at residues 1-34 (MEAPGLAQAAAAESDSRKVAEETPDGAPALCPSP) is disordered. The region spanning 49–303 (FDTLATVGTG…ANDVKHHRWF (255 aa)) is the Protein kinase domain. ATP-binding positions include 55–63 (VGTGTFGRV) and lysine 78. Aspartate 172 acts as the Proton acceptor in catalysis. A Phosphothreonine modification is found at threonine 203. In terms of domain architecture, AGC-kinase C-terminal spans 304 to 358 (RSVDWEAVPQRKLKPPIVPKIAGDGDTSNFETYPENDWDTAAPVPQKDLEIFKNF).

It belongs to the protein kinase superfamily. AGC Ser/Thr protein kinase family. cAMP subfamily. Like other cAMP-dependent protein kinases, the inactive holoenzyme is probably composed of 2 PRKX catalytic subunits and a dimer of regulatory subunits. Interacts (cAMP-dependent) specifically with the regulatory subunits PRKAR1A and PRKAR1B. Compared to other cAMP-dependent serine/threonine protein kinases, does not interact with the 2 other PKA regulatory subunits PRKAR2A and PRKAR2B. Interacts with cAMP-dependent protein kinase inhibitor/PKI proteins; inhibits PRKX. Interacts with GPKOW. Interacts with SMAD6. Interacts with PKD1; involved in differentiation and controlled morphogenesis of the kidney. Interacts with PIN1 (via WW domain). In terms of processing, phosphorylated; autophosphorylates in vitro. As to expression, widely expressed (at protein level). Specifically expressed in blood by macrophages and granulocytes according to PubMed:9860982.

The protein localises to the cytoplasm. It is found in the nucleus. It catalyses the reaction L-seryl-[protein] + ATP = O-phospho-L-seryl-[protein] + ADP + H(+). The enzyme catalyses L-threonyl-[protein] + ATP = O-phospho-L-threonyl-[protein] + ADP + H(+). Binding of cAMP to the PRKAR1A or PRKAR1B regulatory subunits induces dissociation of the holoenzyme heterotetramer. The released monomeric PRKX is then active and able to phosphorylate its substrates. In terms of biological role, serine/threonine protein kinase regulated by and mediating cAMP signaling in cells. Acts through phosphorylation of downstream targets that may include CREB, SMAD6 and PKD1 and has multiple functions in cellular differentiation and epithelial morphogenesis. Regulates myeloid cell differentiation through SMAD6 phosphorylation. Involved in nephrogenesis by stimulating renal epithelial cell migration and tubulogenesis. Also involved in angiogenesis through stimulation of endothelial cell proliferation, migration and vascular-like structure formation. The protein is cAMP-dependent protein kinase catalytic subunit PRKX (PRKX) of Homo sapiens (Human).